The following is a 429-amino-acid chain: Actin-like protein 6A (429 aa).

Residue Ser-2 is modified to N-acetylserine. A Glycyl lysine isopeptide (Lys-Gly) (interchain with G-Cter in SUMO2) cross-link involves residue Lys-62. Phosphoserine is present on residues Ser-86 and Ser-233.

Belongs to the actin family. As to quaternary structure, component of numerous complexes with chromatin remodeling and histone acetyltransferase activity. Component of the NuA4 histone acetyltransferase complex which contains the catalytic subunit KAT5/TIP60 and the subunits EP400, TRRAP/PAF400, BRD8/SMAP, EPC1, DMAP1/DNMAP1, RUVBL1/TIP49, RUVBL2, ING3, actin, ACTL6A/BAF53A, MORF4L1/MRG15, MORF4L2/MRGX, MRGBP, YEATS4/GAS41, VPS72/YL1 and MEAF6. The NuA4 complex interacts with MYC and the adenovirus E1A protein. Component of a NuA4-related complex which contains EP400, TRRAP/PAF400, SRCAP, BRD8/SMAP, EPC1, DMAP1/DNMAP1, RUVBL1/TIP49, RUVBL2, actin, ACTL6A/BAF53A, VPS72 and YEATS4/GAS41. Component of the multiprotein chromatin-remodeling complexes SWI/SNF: SWI/SNF-A (BAF), SWI/SNF-B (PBAF) and related complexes. The canonical complex contains a catalytic subunit (either SMARCA4/BRG1/BAF190A or SMARCA2/BRM/BAF190B) and at least SMARCE1, ACTL6A/BAF53, SMARCC1/BAF155, SMARCC2/BAF170, and SMARCB1/SNF5/BAF47. Other subunits specific to each of the complexes may also be present permitting several possible combinations developmentally and tissue specific. Component of the BAF complex, which includes at least actin (ACTB), ARID1A/BAF250A, ARID1B/BAF250B, SMARCA2/BRM, SMARCA4/BRG1/BAF190A, ACTL6A/BAF53, ACTL6B/BAF53B, SMARCE1/BAF57, SMARCC1/BAF155, SMARCC2/BAF170, SMARCB1/SNF5/INI1, and one or more SMARCD1/BAF60A, SMARCD2/BAF60B, or SMARCD3/BAF60C. In muscle cells, the BAF complex also contains DPF3. Component of the BAF53 complex, at least composed of ACTL6A/BAF53A, RUVBL1/TIP49, SMARCA2/BRM/BAF190B and TRRAP/PAF400, and which may also include a HAT activity related to, but distinct from, that of KAT5. Component of neural progenitors-specific chromatin remodeling complex (npBAF complex) composed of at least, ARID1A/BAF250A or ARID1B/BAF250B, SMARCD1/BAF60A, SMARCD3/BAF60C, SMARCA2/BRM/BAF190B, SMARCA4/BRG1/BAF190A, SMARCB1/BAF47, SMARCC1/BAF155, SMARCE1/BAF57, SMARCC2/BAF170, PHF10/BAF45A, ACTL6A/BAF53A and actin. Component of SWI/SNF (GBAF) subcomplex, which includes at least BICRA or BICRAL (mutually exclusive), BRD9, SS18, SMARCA2/BRM, SMARCA4/BRG1/BAF190A, ACTL6A/BAF53, SMARCC1/BAF155, and SMARCD1/BAF60A. May be a component of the SWI/SNF-B (PBAF) chromatin remodeling complex, at least composed of SMARCA4/BRG1, SMARCB1/BAF47/SNF5, ACTL6A/BAF53A or ACTL6B/BAF53B, SMARCE1/BAF57, SMARCD1/BAF60A, SMARCD2/BAF60B, perhaps SMARCD3/BAF60C, SMARCC1/BAF155, SMARCC2/BAF170, PBRM1/BAF180, ARID2/BAF200 and actin. Interacts with SMARCA4/BRG1/BAF190A. Interacts with PHF10/BAF45A. Component of the chromatin remodeling INO80 complex; specifically part of a complex module associated with the DBINO domain of INO80. Interacts with DPF2. In terms of tissue distribution, widely expressed. Expressed selectively in neural stem and progenitor cells (at protein level).

It is found in the nucleus. Its function is as follows. Involved in transcriptional activation and repression of select genes by chromatin remodeling (alteration of DNA-nucleosome topology). Component of SWI/SNF chromatin remodeling complexes that carry out key enzymatic activities, changing chromatin structure by altering DNA-histone contacts within a nucleosome in an ATP-dependent manner. Required for maximal ATPase activity of SMARCA4/BRG1/BAF190A and for association of the SMARCA4/BRG1/BAF190A containing remodeling complex BAF with chromatin/nuclear matrix. Belongs to the neural progenitors-specific chromatin remodeling complex (npBAF complex) and is required for the proliferation of neural progenitors. During neural development a switch from a stem/progenitor to a postmitotic chromatin remodeling mechanism occurs as neurons exit the cell cycle and become committed to their adult state. The transition from proliferating neural stem/progenitor cells to postmitotic neurons requires a switch in subunit composition of the npBAF and nBAF complexes. As neural progenitors exit mitosis and differentiate into neurons, npBAF complexes which contain ACTL6A/BAF53A and PHF10/BAF45A, are exchanged for homologous alternative ACTL6B/BAF53B and DPF1/BAF45B or DPF3/BAF45C subunits in neuron-specific complexes (nBAF). The npBAF complex is essential for the self-renewal/proliferative capacity of the multipotent neural stem cells. The nBAF complex along with CREST plays a role regulating the activity of genes essential for dendrite growth. Component of the NuA4 histone acetyltransferase (HAT) complex which is involved in transcriptional activation of select genes principally by acetylation of nucleosomal histones H4 and H2A. This modification may both alter nucleosome - DNA interactions and promote interaction of the modified histones with other proteins which positively regulate transcription. This complex may be required for the activation of transcriptional programs associated with oncogene and proto-oncogene mediated growth induction, tumor suppressor mediated growth arrest and replicative senescence, apoptosis, and DNA repair. NuA4 may also play a direct role in DNA repair when recruited to sites of DNA damage. Putative core component of the chromatin remodeling INO80 complex which is involved in transcriptional regulation, DNA replication and probably DNA repair. The polypeptide is Actin-like protein 6A (Actl6a) (Mus musculus (Mouse)).